Reading from the N-terminus, the 1342-residue chain is DNA-directed RNA polymerase subunit beta (1342 aa).

Belongs to the RNA polymerase beta chain family. The RNAP catalytic core consists of 2 alpha, 1 beta, 1 beta' and 1 omega subunit. When a sigma factor is associated with the core the holoenzyme is formed, which can initiate transcription.

The catalysed reaction is RNA(n) + a ribonucleoside 5'-triphosphate = RNA(n+1) + diphosphate. In terms of biological role, DNA-dependent RNA polymerase catalyzes the transcription of DNA into RNA using the four ribonucleoside triphosphates as substrates. The polypeptide is DNA-directed RNA polymerase subunit beta (Salmonella gallinarum (strain 287/91 / NCTC 13346)).